We begin with the raw amino-acid sequence, 86 residues long: MLVVFQRVVRATVLVGRKDTIRTVKTHSGAKKRWILTEDGKSFKRKHAGAQHLNRDTSSSTRARQRQWEEANTIQKRVLKRLLPFK.

The N-terminal 18 residues, 1–18, are a transit peptide targeting the mitochondrion; sequence MLVVFQRVVRATVLVGRK. A disordered region spans residues 45–69; the sequence is RKHAGAQHLNRDTSSSTRARQRQWE.

The protein belongs to the bacterial ribosomal protein bL35 family. As to quaternary structure, component of the mitochondrial large ribosomal subunit (mt-LSU). Mature yeast 74S mitochondrial ribosomes consist of a small (37S) and a large (54S) subunit. The 37S small subunit contains a 15S ribosomal RNA (15S mt-rRNA) and at least 32 different proteins. The 54S large subunit contains a 21S rRNA (21S mt-rRNA) and at least 45 different proteins.

It is found in the mitochondrion. In terms of biological role, component of the mitochondrial ribosome (mitoribosome), a dedicated translation machinery responsible for the synthesis of mitochondrial genome-encoded proteins, including at least some of the essential transmembrane subunits of the mitochondrial respiratory chain. The mitoribosomes are attached to the mitochondrial inner membrane and translation products are cotranslationally integrated into the membrane. The polypeptide is Large ribosomal subunit protein bL35m (new15) (Schizosaccharomyces pombe (strain 972 / ATCC 24843) (Fission yeast)).